Consider the following 459-residue polypeptide: Cysteine--tRNA ligase (459 aa).

Residue C28 participates in Zn(2+) binding. The short motif at 30–40 is the 'HIGH' region element; the sequence is VTVYDLCHFGH. Positions 209, 234, and 238 each coordinate Zn(2+). The 'KMSKS' region signature appears at 266–270; sequence KMSKS. Residue K269 coordinates ATP.

Belongs to the class-I aminoacyl-tRNA synthetase family. In terms of assembly, monomer. Zn(2+) serves as cofactor.

Its subcellular location is the cytoplasm. It carries out the reaction tRNA(Cys) + L-cysteine + ATP = L-cysteinyl-tRNA(Cys) + AMP + diphosphate. This Actinobacillus pleuropneumoniae serotype 5b (strain L20) protein is Cysteine--tRNA ligase.